A 255-amino-acid polypeptide reads, in one-letter code: Thrombin-like enzyme batroxobin (255 aa).

An N-terminal signal peptide occupies residues Met-1–Ala-18. A propeptide spanning residues Gln-19–Leu-24 is cleaved from the precursor. Residues Val-25–Ala-247 form the Peptidase S1 domain. 6 disulfides stabilise this stretch: Cys-31–Cys-163, Cys-50–Cys-66, Cys-98–Cys-254, Cys-142–Cys-208, Cys-174–Cys-187, and Cys-198–Cys-223. Active-site charge relay system residues include His-65 and Asp-110. An N-linked (GlcNAc...) asparagine glycan is attached at Asn-170. Ser-202 functions as the Charge relay system in the catalytic mechanism. Asn-249 carries N-linked (GlcNAc...) asparagine glycosylation.

The protein belongs to the peptidase S1 family. Snake venom subfamily. Monomer. Expressed by the venom gland.

Its subcellular location is the secreted. The catalysed reaction is Selective cleavage of Arg-|-Xaa bond in fibrinogen, to form fibrin, and release fibrinopeptide A. The specificity of further degradation of fibrinogen varies with species origin of the enzyme.. Its function is as follows. Thrombin-like snake venom serine protease. Cleaves Arg-Gly bonds in fibrinogen alpha chains (FGA). In Bothrops atrox (Barba amarilla), this protein is Thrombin-like enzyme batroxobin.